A 437-amino-acid chain; its full sequence is MANVVVIGAQWGDEGKGKITDLLSRSADVVVRYQGGVNAGHTIVVDGRVLKLHLIPSGILYPDTTCLIGSGTVVDPKVMLGELDMLISNGIDISGLQLASTAHITMPYHRLLDLAMEKQRGERKIGTTGRGIGPTYADKSQRSGIRVLDLLDEARLRDRLEGPLSEKNQLLETIYGEKPLDPEEIIREYLAYGKRLAPHVVDCTRAIHEAASDRKNILFEGAQGTLLDLDHGTYPYVTSSNPVSGGACIGAGVGPTLIDRVIGVAKAYTTRVGEGPFPTELSGSLNDQLCDRGGEFGTTTGRRRRCGWFDGVIGRYAVQVNGLDCLAITKLDVLDEMDKIQVSVAYELDGERIDYFPSCSEDFARCKPIFETLPGWQCSTAECRRLEDLPAPAMDYLRFLADLMDVPIAIVSLGASRDQTIVVEDPIHGPKRALLSA.

GTP-binding positions include 12-18 and 40-42; these read GDEGKGK and GHT. D13 functions as the Proton acceptor in the catalytic mechanism. 2 residues coordinate Mg(2+): D13 and G40. Residues 13–16, 38–41, T128, R142, Q223, T238, and R302 contribute to the IMP site; these read DEGK and NAGH. Residue H41 is the Proton donor of the active site. 298–304 is a binding site for substrate; it reads TTTGRRR. GTP-binding positions include R304, 330–332, and 412–414; these read KLD and SLG.

This sequence belongs to the adenylosuccinate synthetase family. As to quaternary structure, homodimer. Requires Mg(2+) as cofactor.

The protein localises to the cytoplasm. The enzyme catalyses IMP + L-aspartate + GTP = N(6)-(1,2-dicarboxyethyl)-AMP + GDP + phosphate + 2 H(+). Its pathway is purine metabolism; AMP biosynthesis via de novo pathway; AMP from IMP: step 1/2. Its function is as follows. Plays an important role in the de novo pathway of purine nucleotide biosynthesis. Catalyzes the first committed step in the biosynthesis of AMP from IMP. The sequence is that of Adenylosuccinate synthetase from Synechococcus sp. (strain CC9311).